The sequence spans 149 residues: Deoxyuridine 5'-triphosphate nucleotidohydrolase (149 aa).

Residues 66 to 68, asparagine 79, 83 to 85, and lysine 93 contribute to the substrate site; these read RSG and TID.

Belongs to the dUTPase family. Requires Mg(2+) as cofactor.

It carries out the reaction dUTP + H2O = dUMP + diphosphate + H(+). Its pathway is pyrimidine metabolism; dUMP biosynthesis; dUMP from dCTP (dUTP route): step 2/2. In terms of biological role, this enzyme is involved in nucleotide metabolism: it produces dUMP, the immediate precursor of thymidine nucleotides and it decreases the intracellular concentration of dUTP so that uracil cannot be incorporated into DNA. The polypeptide is Deoxyuridine 5'-triphosphate nucleotidohydrolase (Corynebacterium glutamicum (strain ATCC 13032 / DSM 20300 / JCM 1318 / BCRC 11384 / CCUG 27702 / LMG 3730 / NBRC 12168 / NCIMB 10025 / NRRL B-2784 / 534)).